Consider the following 253-residue polypeptide: 3-dehydroquinate dehydratase (253 aa).

Residues 46–48 (EWR) and Arg82 contribute to the 3-dehydroquinate site. The active-site Proton donor/acceptor is the His143. Lys170 (schiff-base intermediate with substrate) is an active-site residue. 3-dehydroquinate is bound by residues Arg213, Ser232, and Gln236.

Belongs to the type-I 3-dehydroquinase family. In terms of assembly, homodimer.

It carries out the reaction 3-dehydroquinate = 3-dehydroshikimate + H2O. It functions in the pathway metabolic intermediate biosynthesis; chorismate biosynthesis; chorismate from D-erythrose 4-phosphate and phosphoenolpyruvate: step 3/7. Involved in the third step of the chorismate pathway, which leads to the biosynthesis of aromatic amino acids. Catalyzes the cis-dehydration of 3-dehydroquinate (DHQ) and introduces the first double bond of the aromatic ring to yield 3-dehydroshikimate. In Syntrophotalea carbinolica (strain DSM 2380 / NBRC 103641 / GraBd1) (Pelobacter carbinolicus), this protein is 3-dehydroquinate dehydratase.